The following is a 356-amino-acid chain: ATP-dependent 6-phosphofructokinase (356 aa).

ATP-binding positions include Gly-15, Lys-78–Gly-79, and Gly-115–Thr-118. Position 116 (Glu-116) interacts with Mg(2+). Residues Thr-138–Asp-140, Arg-175, Met-182–Arg-184, Glu-235, Arg-272, and His-278–Arg-281 contribute to the substrate site. Asp-140 (proton acceptor) is an active-site residue.

Belongs to the phosphofructokinase type A (PFKA) family. Mixed-substrate PFK group III subfamily. In terms of assembly, homodimer or homotetramer. It depends on Mg(2+) as a cofactor.

It is found in the cytoplasm. The enzyme catalyses beta-D-fructose 6-phosphate + ATP = beta-D-fructose 1,6-bisphosphate + ADP + H(+). It participates in carbohydrate degradation; glycolysis; D-glyceraldehyde 3-phosphate and glycerone phosphate from D-glucose: step 3/4. In terms of biological role, catalyzes the phosphorylation of D-fructose 6-phosphate to fructose 1,6-bisphosphate by ATP, the first committing step of glycolysis. This Chloroflexus aggregans (strain MD-66 / DSM 9485) protein is ATP-dependent 6-phosphofructokinase.